Reading from the N-terminus, the 463-residue chain is UDP-N-acetylmuramate--L-alanine ligase (463 aa).

112–118 serves as a coordination point for ATP; it reads GTHGKTT.

Belongs to the MurCDEF family.

It localises to the cytoplasm. It carries out the reaction UDP-N-acetyl-alpha-D-muramate + L-alanine + ATP = UDP-N-acetyl-alpha-D-muramoyl-L-alanine + ADP + phosphate + H(+). It participates in cell wall biogenesis; peptidoglycan biosynthesis. In terms of biological role, cell wall formation. The protein is UDP-N-acetylmuramate--L-alanine ligase of Thiobacillus denitrificans (strain ATCC 25259 / T1).